A 684-amino-acid chain; its full sequence is Threonine--tRNA ligase (684 aa).

The 64-residue stretch at 1–64 (MTAPNPSSLV…ESDTEVEPVA (64 aa)) folds into the TGS domain. The tract at residues 261–567 (DHRKLGVELD…LTEHYAGAFP (307 aa)) is catalytic. Residues Cys-366, His-417, and His-544 each coordinate Zn(2+).

Belongs to the class-II aminoacyl-tRNA synthetase family. Homodimer. Zn(2+) serves as cofactor.

It is found in the cytoplasm. The enzyme catalyses tRNA(Thr) + L-threonine + ATP = L-threonyl-tRNA(Thr) + AMP + diphosphate + H(+). Functionally, catalyzes the attachment of threonine to tRNA(Thr) in a two-step reaction: L-threonine is first activated by ATP to form Thr-AMP and then transferred to the acceptor end of tRNA(Thr). Also edits incorrectly charged L-seryl-tRNA(Thr). The sequence is that of Threonine--tRNA ligase from Mycobacteroides abscessus (strain ATCC 19977 / DSM 44196 / CCUG 20993 / CIP 104536 / JCM 13569 / NCTC 13031 / TMC 1543 / L948) (Mycobacterium abscessus).